The primary structure comprises 464 residues: Argininosuccinate lyase (464 aa).

It belongs to the lyase 1 family. Argininosuccinate lyase subfamily.

It localises to the cytoplasm. The catalysed reaction is 2-(N(omega)-L-arginino)succinate = fumarate + L-arginine. The protein operates within amino-acid biosynthesis; L-arginine biosynthesis; L-arginine from L-ornithine and carbamoyl phosphate: step 3/3. The chain is Argininosuccinate lyase from Pseudomonas syringae pv. syringae (strain B728a).